The chain runs to 684 residues: DNA gyrase subunit B, novobiocin-sensitive (684 aa).

Residues 1–22 (MADSGNPNENTPSVATGENGEV) form a disordered region. The interval 154–302 (VKTDGYRWTQ…RMLSVEIAMQ (149 aa)) is novobiocin-binding. One can recognise a Toprim domain in the interval 463–577 (CEIFIVEGDS…AGHVYLSRPP (115 aa)). Residues E469, D542, and D544 each coordinate Mg(2+).

It belongs to the type II topoisomerase GyrB family. Heterotetramer, composed of two GyrA and two GyrB chains. In the heterotetramer, GyrA contains the active site tyrosine that forms a transient covalent intermediate with DNA, while GyrB binds cofactors and catalyzes ATP hydrolysis. It depends on Mg(2+) as a cofactor. Requires Mn(2+) as cofactor. Ca(2+) is required as a cofactor.

It is found in the cytoplasm. It carries out the reaction ATP-dependent breakage, passage and rejoining of double-stranded DNA.. Its function is as follows. A type II topoisomerase that negatively supercoils closed circular double-stranded (ds) DNA in an ATP-dependent manner to modulate DNA topology and maintain chromosomes in an underwound state. Negative supercoiling favors strand separation, and DNA replication, transcription, recombination and repair, all of which involve strand separation. Also able to catalyze the interconversion of other topological isomers of dsDNA rings, including catenanes and knotted rings. Type II topoisomerases break and join 2 DNA strands simultaneously in an ATP-dependent manner. The chain is DNA gyrase subunit B, novobiocin-sensitive from Streptomyces niveus (Streptomyces spheroides).